We begin with the raw amino-acid sequence, 265 residues long: MTDRRNIYFFYKKSEETDEQCKKLKQLAEEHGFRVVHHHNEANIIASIGGDGTFLQAVRKTNFRDDCLYVGVAKKGKAHLYADFNIYDTDKMIEATNSEQIEVRKYPLIDVTVDGTSFQCLNEVSIRSSIIKTFVMDVYIDDLHFETFRGDGMIVSTPTGSTAYNKSVDGAIVDPLIPCIQVTELASLNNNTYRTLGSPFILSADRKLTLKIVQDGNDYPIIGLDNEAFSTMNVKEVEVSLSGKMIKTIKLKDNSFWEKVRRTFL.

D51 serves as the catalytic Proton acceptor. NAD(+)-binding positions include 51–52 (DG), 122–123 (NE), R149, D151, 162–167 (TAYNKS), and A186.

It belongs to the NAD kinase family. A divalent metal cation is required as a cofactor.

It is found in the cytoplasm. It catalyses the reaction NAD(+) + ATP = ADP + NADP(+) + H(+). Its function is as follows. Involved in the regulation of the intracellular balance of NAD and NADP, and is a key enzyme in the biosynthesis of NADP. Catalyzes specifically the phosphorylation on 2'-hydroxyl of the adenosine moiety of NAD to yield NADP. The chain is NAD kinase 2 from Bacillus licheniformis (strain ATCC 14580 / DSM 13 / JCM 2505 / CCUG 7422 / NBRC 12200 / NCIMB 9375 / NCTC 10341 / NRRL NRS-1264 / Gibson 46).